Here is a 121-residue protein sequence, read N- to C-terminus: MSITKDQMLEAFAAMSVMEVVELIEAMEEKFGVSAAAAVVSGGGDAVAAEEQTEFDVVLTSFGENKVAVIKALRSATGLGLKEAKTMAESSPIAVKEAVSKEEAATLKADLEAAGASVEVK.

This sequence belongs to the bacterial ribosomal protein bL12 family. Homodimer. Part of the ribosomal stalk of the 50S ribosomal subunit. Forms a multimeric L10(L12)X complex, where L10 forms an elongated spine to which 2 to 4 L12 dimers bind in a sequential fashion. Binds GTP-bound translation factors.

Functionally, forms part of the ribosomal stalk which helps the ribosome interact with GTP-bound translation factors. Is thus essential for accurate translation. This chain is Large ribosomal subunit protein bL12, found in Shewanella frigidimarina (strain NCIMB 400).